The sequence spans 55 residues: Large ribosomal subunit protein bL32 (55 aa).

The span at 1–19 shows a compositional bias: basic residues; it reads MAVPKRRMSRANTHSRRSQ. The disordered stretch occupies residues 1 to 20; it reads MAVPKRRMSRANTHSRRSQW.

It belongs to the bacterial ribosomal protein bL32 family.

The protein is Large ribosomal subunit protein bL32 of Corynebacterium jeikeium (strain K411).